The primary structure comprises 411 residues: 2,3-bisphosphoglycerate-independent phosphoglycerate mutase (411 aa).

This sequence belongs to the BPG-independent phosphoglycerate mutase family. A-PGAM subfamily.

The enzyme catalyses (2R)-2-phosphoglycerate = (2R)-3-phosphoglycerate. It participates in carbohydrate degradation; glycolysis; pyruvate from D-glyceraldehyde 3-phosphate: step 3/5. Catalyzes the interconversion of 2-phosphoglycerate and 3-phosphoglycerate. This is 2,3-bisphosphoglycerate-independent phosphoglycerate mutase from Methanosphaerula palustris (strain ATCC BAA-1556 / DSM 19958 / E1-9c).